A 72-amino-acid polypeptide reads, in one-letter code: ATP synthase subunit c (72 aa).

2 consecutive transmembrane segments (helical) span residues 4-24 (ALGAGLAVSIAGIGGGIGMGI) and 46-66 (LLFITLAFIETLTIYGLLIAF).

Belongs to the ATPase C chain family. F-type ATPases have 2 components, F(1) - the catalytic core - and F(0) - the membrane proton channel. F(1) has five subunits: alpha(3), beta(3), gamma(1), delta(1), epsilon(1). F(0) has three main subunits: a(1), b(2) and c(10-14). The alpha and beta chains form an alternating ring which encloses part of the gamma chain. F(1) is attached to F(0) by a central stalk formed by the gamma and epsilon chains, while a peripheral stalk is formed by the delta and b chains.

The protein resides in the cell membrane. Its function is as follows. F(1)F(0) ATP synthase produces ATP from ADP in the presence of a proton or sodium gradient. F-type ATPases consist of two structural domains, F(1) containing the extramembraneous catalytic core and F(0) containing the membrane proton channel, linked together by a central stalk and a peripheral stalk. During catalysis, ATP synthesis in the catalytic domain of F(1) is coupled via a rotary mechanism of the central stalk subunits to proton translocation. Key component of the F(0) channel; it plays a direct role in translocation across the membrane. A homomeric c-ring of between 10-14 subunits forms the central stalk rotor element with the F(1) delta and epsilon subunits. The polypeptide is ATP synthase subunit c (Syntrophomonas wolfei subsp. wolfei (strain DSM 2245B / Goettingen)).